Reading from the N-terminus, the 256-residue chain is Enkurin (256 aa).

Residues T48 to T92 form a disordered region. The span at D61 to L72 shows a compositional bias: basic and acidic residues. The SH3-binding motif lies at P83 to P89. In terms of domain architecture, Enkurin spans K160–I252. The region spanning I176 to R187 is the IQ domain.

In terms of assembly, microtubule inner protein component of sperm flagellar doublet microtubules. Binds calmodulin via its IQ domain. Interacts with TRPC1, TRPC2, TRPC5, but not TRPC3. Interacts with CFAP45.

It is found in the cytoplasm. It localises to the cytoskeleton. Its subcellular location is the cilium axoneme. The protein resides in the flagellum axoneme. Functionally, adapter that functions to localize a calcium-sensitive signal transduction machinery in sperm to a calcium-permeable ion channel. Microtubule inner protein (MIP) part of the dynein-decorated doublet microtubules (DMTs) in cilia axoneme, which is required for motile cilia beating. The polypeptide is Enkurin (ENKUR) (Sus scrofa (Pig)).